A 138-amino-acid polypeptide reads, in one-letter code: Basic phospholipase A2 PL-X' (138 aa).

Positions methionine 1–glycine 16 are cleaved as a signal peptide. 7 disulfides stabilise this stretch: cysteine 42-cysteine 131, cysteine 44-cysteine 60, cysteine 59-cysteine 111, cysteine 65-cysteine 138, cysteine 66-cysteine 104, cysteine 73-cysteine 97, and cysteine 91-cysteine 102. 3 residues coordinate Ca(2+): tyrosine 43, glycine 45, and glycine 47. Histidine 63 is an active-site residue. Residue aspartate 64 coordinates Ca(2+). Aspartate 105 is a catalytic residue.

Belongs to the phospholipase A2 family. Group II subfamily. D49 sub-subfamily. Ca(2+) is required as a cofactor. In terms of tissue distribution, expressed by the venom gland.

Its subcellular location is the secreted. It catalyses the reaction a 1,2-diacyl-sn-glycero-3-phosphocholine + H2O = a 1-acyl-sn-glycero-3-phosphocholine + a fatty acid + H(+). Its function is as follows. PLA2 catalyzes the calcium-dependent hydrolysis of the 2-acyl groups in 3-sn-phosphoglycerides. The sequence is that of Basic phospholipase A2 PL-X' from Protobothrops flavoviridis (Habu).